We begin with the raw amino-acid sequence, 147 residues long: Cyanate hydratase (147 aa).

Residues arginine 88, glutamate 91, and serine 114 contribute to the active site.

Belongs to the cyanase family.

The enzyme catalyses cyanate + hydrogencarbonate + 3 H(+) = NH4(+) + 2 CO2. Catalyzes the reaction of cyanate with bicarbonate to produce ammonia and carbon dioxide. This Dechloromonas aromatica (strain RCB) protein is Cyanate hydratase.